Consider the following 970-residue polypeptide: Testis anion transporter 1 (970 aa).

Residues 1-95 (MAQLERSAIS…YRLKDWLLGD (95 aa)) are Cytoplasmic-facing. The chain crosses the membrane as a helical span at residues 96 to 116 (LLAGISVGLVQVPQGLTLSLL). The Extracellular segment spans residues 117 to 119 (ARQ). A helical membrane pass occupies residues 120–140 (LIPPLNIAYAAFCSSVIYVIF). Residues 141–146 (GSCHQM) lie on the Cytoplasmic side of the membrane. A helical transmembrane segment spans residues 147–167 (SIGSFFLVSALLINVLKVSPF). The Extracellular segment spans residues 168-202 (NNGQLVMGSFVKNEFSAPSYLMGYNKSLSVVATTT). The N-linked (GlcNAc...) asparagine glycan is linked to Asn192. Residues 203 to 223 (FLTGIIQLIMGVLGLGFIATY) form a helical membrane-spanning segment. Residues 224 to 232 (LPESAMSAY) lie on the Cytoplasmic side of the membrane. The helical transmembrane segment at 233 to 253 (LAAVALHIMLSQLTFIFGIMI) threads the bilayer. Topologically, residues 254–270 (SFHAGPISFFYDIINYC) are extracellular. A helical transmembrane segment spans residues 271-291 (VALPKANSTSILVFLTVVVAL). The Cytoplasmic segment spans residues 292-307 (RINKCIRISFNQYPIE). A helical membrane pass occupies residues 308–328 (FPMELFLIIGFTVIANKISMA). The Extracellular portion of the chain corresponds to 329–355 (TETSQTLIDMIPYSFLLPVTPDFSLLP). A helical membrane pass occupies residues 356-376 (KIILQAFSLSLVSSFLLIFLG). The Cytoplasmic portion of the chain corresponds to 377–392 (KKIASLHNYSVNSNQD). The chain crosses the membrane as a helical span at residues 393 to 413 (LIAIGLCNVVSSFFRSCVFTG). Residues 414–429 (AIARTIIQDKSGGRQQ) lie on the Extracellular side of the membrane. A helical membrane pass occupies residues 430–450 (FASLVGAGVMLLLMVKMGHFF). Residues 451–452 (YT) are Cytoplasmic-facing. Residues 453 to 473 (LPNAVLAGIILSNVIPYLETI) form a helical membrane-spanning segment. Over 474–497 (SNLPSLWRQDQYDCALWMMTFSSS) the chain is Extracellular. Residues 498-518 (IFLGLDIGLIISVVSAFFITT) form a helical membrane-spanning segment. The Cytoplasmic segment spans residues 519 to 970 (VRSHRAKILL…SPEGNSNEDV (452 aa)). The 253-residue stretch at 543–795 (DYREIITIPG…LSVHDAVLFA (253 aa)) folds into the STAS domain. Positions 664-970 (TVSSVSQKNQ…SPEGNSNEDV (307 aa)) are interaction with RACGAP1. A compositionally biased stretch (acidic residues) spans 858–868 (SELDLELESEQ). The interval 858–970 (SELDLELESE…SPEGNSNEDV (113 aa)) is disordered. Basic and acidic residues predominate over residues 877 to 898 (DLDRELEPEMEPKAETETKTQT). The segment covering 938-948 (STQSQTQTRTW) has biased composition (low complexity).

This sequence belongs to the SLC26A/SulP transporter (TC 2.A.53) family. As to quaternary structure, interacts with RACGAP1. Interacts with CFTR; stimulates anion transport activity of CFTR. N-glycosylated. In terms of tissue distribution, expression observed exclusively in testis, restricted to the meiotic phase of the germ cell. Abundant expression located in the seminiferous tubules, concentrated on the luminal side of the tubuli harboring the spermatocytes and spermatids.

The protein localises to the membrane. The enzyme catalyses sulfate(out) + chloride(in) = sulfate(in) + chloride(out). It catalyses the reaction oxalate(in) + chloride(out) = oxalate(out) + chloride(in). Its activity is regulated as follows. Activity is inhibited by 4,4'-Di-isothiocyanatostilbene-2,2'-disulfonic acid (DIDS - an inhibitor of several anion channels and transporters) and gluconate. Its function is as follows. Antiporter that mediates the exchange of sulfate and oxalate against chloride ions across a membrane. Stimulates anion transport activity of CFTR. May cooperate with CFTR in the regulation of chloride and bicarbonate ions fluxes required for activation of the ADCY10/PKA pathway during sperm motility and sperm capacitation. May play a role in sperm tail differentiation and motility and hence male fertility. The chain is Testis anion transporter 1 from Homo sapiens (Human).